We begin with the raw amino-acid sequence, 70 residues long: Small ribosomal subunit protein bS21 (70 aa).

The protein belongs to the bacterial ribosomal protein bS21 family.

This is Small ribosomal subunit protein bS21 from Sulfurimonas denitrificans (strain ATCC 33889 / DSM 1251) (Thiomicrospira denitrificans (strain ATCC 33889 / DSM 1251)).